The sequence spans 366 residues: Leucine-rich repeat-containing protein 58 (366 aa).

Position 19 is a phosphoserine (S19). 9 LRR repeats span residues 40 to 61 (ALLR…LGGG), 64 to 86 (HLQL…LTLS), 87 to 108 (GLRT…PKGL), 116 to 138 (SLQV…LELR), 139 to 161 (ALQT…ENLR), 162 to 184 (SLEC…ANLP), 185 to 206 (SLNY…LSQL), 208 to 229 (SLRS…ILNL), and 231 to 251 (HLEE…RDLT). Low complexity predominate over residues 337–346 (ASHSSTSQSE). The disordered stretch occupies residues 337-356 (ASHSSTSQSESDSEDEASVA).

This chain is Leucine-rich repeat-containing protein 58 (Lrrc58), found in Mus musculus (Mouse).